A 417-amino-acid chain; its full sequence is Serine hydroxymethyltransferase (417 aa).

(6S)-5,6,7,8-tetrahydrofolate contacts are provided by residues Leu112 and 116 to 118; that span reads GHL. Residue Lys221 is modified to N6-(pyridoxal phosphate)lysine. Glu247 is a (6S)-5,6,7,8-tetrahydrofolate binding site.

The protein belongs to the SHMT family. Homodimer. The cofactor is pyridoxal 5'-phosphate.

The protein localises to the cytoplasm. The enzyme catalyses (6R)-5,10-methylene-5,6,7,8-tetrahydrofolate + glycine + H2O = (6S)-5,6,7,8-tetrahydrofolate + L-serine. It participates in one-carbon metabolism; tetrahydrofolate interconversion. Its pathway is amino-acid biosynthesis; glycine biosynthesis; glycine from L-serine: step 1/1. Its function is as follows. Catalyzes the reversible interconversion of serine and glycine with tetrahydrofolate (THF) serving as the one-carbon carrier. This reaction serves as the major source of one-carbon groups required for the biosynthesis of purines, thymidylate, methionine, and other important biomolecules. Also exhibits THF-independent aldolase activity toward beta-hydroxyamino acids, producing glycine and aldehydes, via a retro-aldol mechanism. This is Serine hydroxymethyltransferase from Borreliella burgdorferi (strain ATCC 35210 / DSM 4680 / CIP 102532 / B31) (Borrelia burgdorferi).